The following is a 201-amino-acid chain: MARYTGPATRKSRRLRVDLVGGDANFERRPYPPGQAGRARIKESEYLLQLQEKQKARFTYGIMEKQFRRYYAEAHRRPGKTGDNLMVLLESRLDNVVYRAGLARTRRQARQLVSHGHFTVNGKKVNVPSFQVSQYDIIDVREKSRKMVWFDEAQEALADAVVPAWLQVVPSTLRILVHQLPERAQIEVPIQEQLIVEFYSK.

An S4 RNA-binding domain is found at 91 to 151; that stretch reads SRLDNVVYRA…EKSRKMVWFD (61 aa).

This sequence belongs to the universal ribosomal protein uS4 family. Part of the 30S ribosomal subunit. Contacts protein S5. The interaction surface between S4 and S5 is involved in control of translational fidelity.

Functionally, one of the primary rRNA binding proteins, it binds directly to 16S rRNA where it nucleates assembly of the body of the 30S subunit. Its function is as follows. With S5 and S12 plays an important role in translational accuracy. The chain is Small ribosomal subunit protein uS4 from Corynebacterium kroppenstedtii (strain DSM 44385 / JCM 11950 / CIP 105744 / CCUG 35717).